A 699-amino-acid polypeptide reads, in one-letter code: Elongation factor G (699 aa).

The 276-residue stretch at 8-283 (EHIRNIGICA…AVVDFLPSPI (276 aa)) folds into the tr-type G domain. GTP-binding positions include 17–24 (AHIDAGKT), 81–85 (DTPGH), and 135–138 (NKMD).

The protein belongs to the TRAFAC class translation factor GTPase superfamily. Classic translation factor GTPase family. EF-G/EF-2 subfamily.

It is found in the cytoplasm. Its function is as follows. Catalyzes the GTP-dependent ribosomal translocation step during translation elongation. During this step, the ribosome changes from the pre-translocational (PRE) to the post-translocational (POST) state as the newly formed A-site-bound peptidyl-tRNA and P-site-bound deacylated tRNA move to the P and E sites, respectively. Catalyzes the coordinated movement of the two tRNA molecules, the mRNA and conformational changes in the ribosome. This Rickettsia helvetica protein is Elongation factor G.